The chain runs to 253 residues: Uroplakin-3b-like protein 1 (253 aa).

The N-terminal stretch at 1–26 is a signal peptide; that stretch reads MGLGRGQSPLLMALLLLLACLQMGMS. Topologically, residues 27-194 are extracellular; it reads LERISYVPQL…PGPQTAGTVV (168 aa). 2 N-linked (GlcNAc...) asparagine glycosylation sites follow: N78 and N130. A helical membrane pass occupies residues 195–215; the sequence is IIAILSVLLAVLLAALLALLI. Over 216-253 the chain is Cytoplasmic; that stretch reads FTWYDTCGSTPISGPGELVFVRKYDTHHMSRPSTVGGS.

This sequence belongs to the uroplakin-3 family.

It is found in the membrane. This chain is Uroplakin-3b-like protein 1, found in Bos taurus (Bovine).